The following is a 98-amino-acid chain: Integration host factor subunit beta (98 aa).

It belongs to the bacterial histone-like protein family. Heterodimer of an alpha and a beta chain.

Functionally, this protein is one of the two subunits of integration host factor, a specific DNA-binding protein that functions in genetic recombination as well as in transcriptional and translational control. In Pseudomonas entomophila (strain L48), this protein is Integration host factor subunit beta.